The sequence spans 185 residues: Large ribosomal subunit protein uL13 (185 aa).

The protein belongs to the universal ribosomal protein uL13 family. Part of the 50S ribosomal subunit.

This protein is one of the early assembly proteins of the 50S ribosomal subunit, although it is not seen to bind rRNA by itself. It is important during the early stages of 50S assembly. This chain is Large ribosomal subunit protein uL13, found in Pyrobaculum islandicum (strain DSM 4184 / JCM 9189 / GEO3).